The following is an 83-amino-acid chain: uncharacterized protein (83 aa).

Residues 58-78 (AVLLWIAIIATLGNIVVVGVV) traverse the membrane as a helical segment.

The protein localises to the membrane. This is an uncharacterized protein from Homo sapiens (Human).